The primary structure comprises 478 residues: RNA-binding protein 42 (478 aa).

Residues 1–20 show a composition bias toward low complexity; the sequence is MASAMAGAGPAPGLPVAGGP. Residues 1 to 33 are disordered; that stretch reads MASAMAGAGPAPGLPVAGGPVVPGPGVGIPGKS. The residue at position 2 (Ala-2) is an N-acetylalanine. The residue at position 133 (Ser-133) is a Phosphoserine. Residues Arg-151, Arg-156, Arg-166, and Arg-179 each carry the asymmetric dimethylarginine modification. 2 disordered regions span residues 171–209 and 317–354; these read LSSA…PPMA and SLRP…PEKL. Positions 193 to 205 are enriched in pro residues; that stretch reads PPLPGPPGPPMML. The segment at 234-478 is necessary for interaction with HNRNPK; sequence DLGLGLGLGL…QKEKKKLGLR (245 aa). A compositionally biased stretch (basic and acidic residues) spans 343 to 354; the sequence is GEDKKKGKPEKL. The 79-residue stretch at 379–457 folds into the RRM domain; it reads FRIFCGDLGN…RPIKLRKSMW (79 aa).

It belongs to the RRM RBM42 family. In terms of assembly, interacts with HNRNPK.

The protein resides in the nucleus. It localises to the cytoplasm. Binds (via the RRM domain) to the 3' untranslated region (UTR) of p21 mRNA. The protein is RNA-binding protein 42 (Rbm42) of Rattus norvegicus (Rat).